We begin with the raw amino-acid sequence, 890 residues long: Putative RNA-binding protein 15B (890 aa).

The disordered stretch occupies residues 1–133; that stretch reads MKRQSERDSS…AEPACPGSSA (133 aa). The span at 10-20 shows a compositional bias: low complexity; sequence SPSGRGSSSSA. Composition is skewed to basic and acidic residues over residues 22–34 and 66–78; these read RPRE…EAGG and GHRD…DANH. Gly residues predominate over residues 86–99; that stretch reads SGSGAGGGGRGGKA. Phosphoserine occurs at positions 109 and 113. The span at 113–124 shows a compositional bias: pro residues; sequence SPLPPPPPPPGA. The region spanning 139–219 is the RRM 1 domain; the sequence is KTLLISSLSP…RPLKVEPVYL (81 aa). K213 is covalently cross-linked (Glycyl lysine isopeptide (Lys-Gly) (interchain with G-Cter in SUMO2)). The interval 219 to 253 is disordered; the sequence is LRGGGGSSRRSSSSSAAASTPPPGPPAPADPLGYL. Residues 226–237 are compositionally biased toward low complexity; it reads SRRSSSSSAAAS. Positions 238 to 247 are enriched in pro residues; it reads TPPPGPPAPA. 2 positions are modified to phosphoserine: S265 and S267. RRM domains are found at residues 337–414 and 418–492; these read RNLF…YGKA and TRLW…FAKA. T532 bears the Phosphothreonine mark. The tract at residues 547–705 is disordered; sequence EGDWTSPSKS…KPLEEPKHET (159 aa). Phosphoserine is present on residues S552, S556, and S562. Composition is skewed to basic and acidic residues over residues 573–616 and 626–646; these read RSGE…ERSR and RGSD…EGTK. The Nuclear localization signal motif lies at 593–597; it reads RRKRR. Residues 647-657 are compositionally biased toward low complexity; sequence ESSSNSLSNSR. Residues 671-703 show a composition bias toward basic and acidic residues; the sequence is EAADSSHGKKARDSERNHRTTEAEPKPLEEPKH. K702 is covalently cross-linked (Glycyl lysine isopeptide (Lys-Gly) (interchain with G-Cter in SUMO2)). Residues 711 to 889 enclose the SPOC domain; sequence LSEYAQTLQL…HMVIVIVRDT (179 aa). The tract at residues 722–890 is interaction with Epstein-Barr virus BMLF1; the sequence is WNGLLVLKNS…MVIVIVRDTA (169 aa).

This sequence belongs to the RRM Spen family. Component of the WMM complex, a N6-methyltransferase complex composed of a catalytic subcomplex, named MAC, and of an associated subcomplex, named MACOM. The MAC subcomplex is composed of METTL3 and METTL14. The MACOM subcomplex is composed of WTAP, ZC3H13, CBLL1/HAKAI, VIRMA, and, in some cases of RBM15 (RBM15 or RBM15B). May interact with NCOR2. Interacts with NXF1, the interaction is required to promote mRNA export. In terms of assembly, (Microbial infection) Interacts (via the SPOC domain) with Epstein-Barr virus BMLF1 (via the N-terminus); the interaction is direct. As to expression, ubiquitously expressed.

Its subcellular location is the nucleus. The protein resides in the nucleoplasm. It is found in the nucleus speckle. It localises to the nucleus envelope. Its function is as follows. RNA-binding protein that acts as a key regulator of N6-methyladenosine (m6A) methylation of RNAs, thereby regulating different processes, such as alternative splicing of mRNAs and X chromosome inactivation mediated by Xist RNA. Associated component of the WMM complex, a complex that mediates N6-methyladenosine (m6A) methylation of RNAs, a modification that plays a role in the efficiency of mRNA splicing and RNA processing. Plays a key role in m6A methylation, possibly by binding target RNAs and recruiting the WMM complex. Involved in random X inactivation mediated by Xist RNA: acts by binding Xist RNA and recruiting the WMM complex, which mediates m6A methylation, leading to target YTHDC1 reader on Xist RNA and promoting transcription repression activity of Xist. Functions in the regulation of alternative or illicit splicing, possibly by regulating m6A methylation. Inhibits pre-mRNA splicing. Also functions as a mRNA export factor by acting as a cofactor for the nuclear export receptor NXF1. This Homo sapiens (Human) protein is Putative RNA-binding protein 15B.